A 222-amino-acid chain; its full sequence is Uridine kinase (222 aa).

ATP is bound at residue 13 to 20; sequence GGSGAGKT.

It belongs to the uridine kinase family.

The protein resides in the cytoplasm. It carries out the reaction uridine + ATP = UMP + ADP + H(+). The catalysed reaction is cytidine + ATP = CMP + ADP + H(+). It functions in the pathway pyrimidine metabolism; CTP biosynthesis via salvage pathway; CTP from cytidine: step 1/3. The protein operates within pyrimidine metabolism; UMP biosynthesis via salvage pathway; UMP from uridine: step 1/1. The protein is Uridine kinase of Chlamydia pneumoniae (Chlamydophila pneumoniae).